We begin with the raw amino-acid sequence, 318 residues long: NADH-ubiquinone oxidoreductase chain 1 (318 aa).

Helical transmembrane passes span 2–22, 68–88, 100–120, 146–166, 171–191, 222–242, 253–273, and 293–313; these read FMINLLMMIVPILLAVAFLTL, ISMFIMAPILALTLALTMWTP, LGILFMLAMSSLAVYSILWSG, LAIILLSVLLLSGSFTLPTLI, HIWLIVPSWPLAMMWFISTLA, LFFLAEYANIIMMNIFTTILF, ELYTINFVTKSMLLTISFLWV, and FLPLTLALCMWHVTMPIITAG.

Belongs to the complex I subunit 1 family. Core subunit of respiratory chain NADH dehydrogenase (Complex I) which is composed of 45 different subunits.

It is found in the mitochondrion inner membrane. The catalysed reaction is a ubiquinone + NADH + 5 H(+)(in) = a ubiquinol + NAD(+) + 4 H(+)(out). Core subunit of the mitochondrial membrane respiratory chain NADH dehydrogenase (Complex I) which catalyzes electron transfer from NADH through the respiratory chain, using ubiquinone as an electron acceptor. Essential for the catalytic activity and assembly of complex I. The polypeptide is NADH-ubiquinone oxidoreductase chain 1 (MT-ND1) (Hipposideros armiger terasensis (Formosan leaf-nosed bat)).